We begin with the raw amino-acid sequence, 682 residues long: MELLRTITYQPAAGTKMCEQALGKACGGDSKKKRPQQPSEDGQPQAQVTPAAPHHHHHHSHSGPEISRIIVDPTTGKRYCRGKVLGKGGFAKCYEMTDLTNNKVYAAKIIPHSRVAKPHQREKIDKEIELHRLLHHKHVVQFYHYFEDKENIYILLEYCSRRSMAHILKARKVLTEPEVRYYLRQIVSGLKYLHEQEILHRDLKLGNFFINEAMELKVGDFGLAARLEPLEHRRRTICGTPNYLSPEVLNKQGHGCESDIWALGCVMYTMLLGRPPFETTNLKETYRCIREARYTMPSSLLAPAKHLIASMLSKNPEDRPSLDDIIRHDFFLQGFTPDRLSSSCCHTVPDFHLSSPAKNFFKKAAAALFGGKKDKARYNDTHNKVSKEDEDIYKLRHDLKKVSITQQPSKHRADEEPQPPPTTVARSGTSAVENKQQIGDAIRMIVRGTLGSCSSSSECLEDSTMGSVADTVARVLRGCLENMPEADCIPKEQLSTSFQWVTKWVDYSNKYGFGYQLSDHTVGVLFNNGAHMSLLPDKKTVHYYAELGQCSVFPATDAPEQFISQVTVLKYFSHYMEENLMDGGDLPSVTDIRRPRLYLLQWLKSDKALMMLFNDGTFQVNFYHDHTKIIICNQSEEYLLTYINEDRISTTFRLTTLLMSGCSLELKNRMEYALNMLLQRCN.

The disordered stretch occupies residues 25-67; the sequence is ACGGDSKKKRPQQPSEDGQPQAQVTPAAPHHHHHHSHSGPEIS. The span at 36-48 shows a compositional bias: polar residues; sequence QQPSEDGQPQAQV. The Protein kinase domain maps to 79–331; the sequence is YCRGKVLGKG…LDDIIRHDFF (253 aa). ATP contacts are provided by residues 85–93 and K108; that span reads LGKGGFAKC. D202 acts as the Proton acceptor in catalysis. T236 is modified (phosphothreonine). The disordered stretch occupies residues 403–432; that stretch reads SITQQPSKHRADEEPQPPPTTVARSGTSAV. 2 consecutive POLO box domains span residues 500–578 and 598–682; these read WVTK…YMEE and YLLQ…QRCN.

The protein belongs to the protein kinase superfamily. Ser/Thr protein kinase family. CDC5/Polo subfamily. As to quaternary structure, interacts with NSF; causing NSF dissociation from GRIA2. Interacts with CIB1. Post-translationally, catalytic activity is enhanced by phosphorylation of Thr-236. Brain, lung and heart.

It is found in the cytoplasm. Its subcellular location is the cytoskeleton. It localises to the microtubule organizing center. The protein localises to the centrosome. The protein resides in the centriole. It is found in the cell projection. Its subcellular location is the dendrite. It carries out the reaction L-seryl-[protein] + ATP = O-phospho-L-seryl-[protein] + ADP + H(+). The catalysed reaction is L-threonyl-[protein] + ATP = O-phospho-L-threonyl-[protein] + ADP + H(+). Activated by phosphorylation of Thr-236. Once activated, activity is stimulated by binding target proteins. Its function is as follows. Tumor suppressor serine/threonine-protein kinase involved in synaptic plasticity, centriole duplication and G1/S phase transition. Polo-like kinases act by binding and phosphorylating proteins that are already phosphorylated on a specific motif recognized by the POLO box domains. Phosphorylates CPAP, NPM1, RAPGEF2, RASGRF1, SNCA, SIPA1L1 and SYNGAP1. Plays a key role in synaptic plasticity and memory by regulating the Ras and Rap protein signaling: required for overactivity-dependent spine remodeling by phosphorylating the Ras activator RASGRF1 and the Rap inhibitor SIPA1L1 leading to their degradation by the proteasome. Conversely, phosphorylates the Rap activator RAPGEF2 and the Ras inhibitor SYNGAP1, promoting their activity. Also regulates synaptic plasticity independently of kinase activity, via its interaction with NSF that disrupts the interaction between NSF and the GRIA2 subunit of AMPARs, leading to a rapid rundown of AMPAR-mediated current that occludes long term depression. Required for procentriole formation and centriole duplication by phosphorylating CPAP and NPM1, respectively. Its induction by p53/TP53 suggests that it may participate in the mitotic checkpoint following stress. This chain is Serine/threonine-protein kinase PLK2 (Plk2), found in Mus musculus (Mouse).